We begin with the raw amino-acid sequence, 208 residues long: Uracil phosphoribosyltransferase (208 aa).

5-phospho-alpha-D-ribose 1-diphosphate contacts are provided by residues Arg78, Arg103, and 130–138; that span reads DPMLATGGS. Uracil is bound by residues Ile193 and 198-200; that span reads GDA. Asp199 provides a ligand contact to 5-phospho-alpha-D-ribose 1-diphosphate.

The protein belongs to the UPRTase family. Mg(2+) is required as a cofactor.

The catalysed reaction is UMP + diphosphate = 5-phospho-alpha-D-ribose 1-diphosphate + uracil. The protein operates within pyrimidine metabolism; UMP biosynthesis via salvage pathway; UMP from uracil: step 1/1. With respect to regulation, allosterically activated by GTP. In terms of biological role, catalyzes the conversion of uracil and 5-phospho-alpha-D-ribose 1-diphosphate (PRPP) to UMP and diphosphate. The polypeptide is Uracil phosphoribosyltransferase (Tolumonas auensis (strain DSM 9187 / NBRC 110442 / TA 4)).